Reading from the N-terminus, the 294-residue chain is Indole-3-glycerol phosphate synthase (294 aa).

The protein belongs to the TrpC family.

The catalysed reaction is 1-(2-carboxyphenylamino)-1-deoxy-D-ribulose 5-phosphate + H(+) = (1S,2R)-1-C-(indol-3-yl)glycerol 3-phosphate + CO2 + H2O. The protein operates within amino-acid biosynthesis; L-tryptophan biosynthesis; L-tryptophan from chorismate: step 4/5. The sequence is that of Indole-3-glycerol phosphate synthase from Synechococcus sp. (strain RCC307).